The sequence spans 286 residues: tRNA (guanine-N(7)-)-methyltransferase (286 aa).

The segment at 1 to 22 (MGRARPKSQKRGDYRVSRSQEN) is disordered. S-adenosyl-L-methionine-binding positions include glycine 104, 127-128 (EI), 162-163 (NS), and cysteine 182. Aspartate 185 is a catalytic residue. 260-262 (TEE) contributes to the S-adenosyl-L-methionine binding site.

The protein belongs to the class I-like SAM-binding methyltransferase superfamily. TrmB family. As to quaternary structure, forms a complex with TRM82.

It is found in the nucleus. It catalyses the reaction guanosine(46) in tRNA + S-adenosyl-L-methionine = N(7)-methylguanosine(46) in tRNA + S-adenosyl-L-homocysteine. Its pathway is tRNA modification; N(7)-methylguanine-tRNA biosynthesis. In terms of biological role, catalyzes the formation of N(7)-methylguanine at position 46 (m7G46) in tRNA. The protein is tRNA (guanine-N(7)-)-methyltransferase of Colletotrichum orbiculare (strain 104-T / ATCC 96160 / CBS 514.97 / LARS 414 / MAFF 240422) (Cucumber anthracnose fungus).